The primary structure comprises 512 residues: Bestrophin-2 (512 aa).

The Cytoplasmic segment spans residues 1–31 (MTVTYTARVAKARFGGFSKLLLLWRGSIYKL). A Ca(2+)-binding site is contributed by Ala10. Residues 32–51 (LWRELLCFLGLFMALSAAYR) traverse the membrane as a helical segment. Topologically, residues 52–60 (FVLTEEQKR) are extracellular. Residues 61–82 (YFEKLVLYCDRYASLIPVSFVL) form a helical membrane-spanning segment. The Cytoplasmic portion of the chain corresponds to 83–238 (GFYVTLVVHR…WISVPLVYTQ (156 aa)). The helical transmembrane segment at 239 to 255 (VVTIAVYSYFLACLIGR) threads the bilayer. The Extracellular portion of the chain corresponds to 256–274 (QFLDPAQGYKDHDLDLCVP). A helical membrane pass occupies residues 275–288 (IFTLLQFFFYAGWL). Over 289 to 512 (KVAEQLINPF…PIGEEEESLA (224 aa)) the chain is Cytoplasmic. Residues Gln293, Asn296, Asp301, and Asp304 each contribute to the Ca(2+) site. Residues 453-512 (VDLGQPEPESEPITGPESPALVPAPRAPSEPLTVVPLSGTRGPAPPWLPSPIGEEEESLA) form a disordered region.

Belongs to the anion channel-forming bestrophin (TC 1.A.46) family. Calcium-sensitive chloride channel subfamily. In terms of assembly, pentamer. Interacts with GLUL; this interaction tethers a fraction of GLUL to the membrane, causing a decrease of cytosolic glutamine synthase (GS) activity and inhibits the chloride channel activity of BEST2 by affecting the gating at the aperture in the absence of intracellular glutamate.

It is found in the cell membrane. The protein localises to the basolateral cell membrane. It catalyses the reaction chloride(in) = chloride(out). The enzyme catalyses iodide(out) = iodide(in). The catalysed reaction is hydrogencarbonate(in) = hydrogencarbonate(out). It carries out the reaction L-glutamate(out) = L-glutamate(in). It catalyses the reaction L-glutamine(out) = L-glutamine(in). Its activity is regulated as follows. Chloride channel activity is allosterically inhibited by GLUL/glutamine synthase (GS) which affects the gating at the aperture in the absence of intracellular glutamate. Inhibitory effect of GLUL is relieved upon increasing of intracellular level of L-glutamate. In terms of biological role, ligand-gated anion channel that allows the movement of anions across cell membranes when activated by calcium (Ca2+). Transports a large specter of anions, namely mediates the movement of chloride, L-glutamate and iodide. Calcium-binding triggers the dilation of the aperture, but calcium-dependent gating is only effective when the size of the passing anion is bigger than the closed aperture. Mediates the calcium-activated hydrogencarbonate movement and participates in colonic hydrogencarbonate secretion concomitant with mucin secretion. In non-pigmented epithelium (NPE), mediates the efflux of intracellular L-glutamate; binding of intracellular L-glutamate activates and open both the neck and the aperture of the channel, leading to L-glutamate exit promoting chloride influx movement from the extracellular side in trans. Also exhibits a directional permeability for intracellular glutamine, in a similar manner as for L-glutamate. In Bos taurus (Bovine), this protein is Bestrophin-2.